The primary structure comprises 222 residues: Probable GTP-binding protein EngB (222 aa).

In terms of domain architecture, EngB-type G spans 23-217 (NASEIVFLGR…REEIVKYTLG (195 aa)). Residues 31–38 (GRSNVGKS), 57–61 (GKTQL), 82–85 (DLPG), 152–155 (TKAD), and 191–193 (FSA) each bind GTP. Residues serine 38 and threonine 59 each coordinate Mg(2+).

It belongs to the TRAFAC class TrmE-Era-EngA-EngB-Septin-like GTPase superfamily. EngB GTPase family. Requires Mg(2+) as cofactor.

Functionally, necessary for normal cell division and for the maintenance of normal septation. The sequence is that of Probable GTP-binding protein EngB from Helicobacter hepaticus (strain ATCC 51449 / 3B1).